The sequence spans 638 residues: Epithelial sodium channel subunit beta (638 aa).

Over 1 to 50 (MPVKKYLLKCLHRLQKGPGYTYKELLVWYCNNTNTHGPKRIICEGPKKKA) the chain is Cytoplasmic. The helical transmembrane segment at 51-71 (MWFLLTLLFACLVCWQWGVFI) threads the bilayer. Residues 72 to 530 (QTYLSWEVSV…GGQFGFWMGG (459 aa)) lie on the Extracellular side of the membrane. 9 disulfide bridges follow: Cys-98/Cys-270, Cys-182/Cys-187, Cys-194/Cys-201, Cys-247/Cys-254, Cys-359/Cys-446, Cys-384/Cys-442, Cys-388/Cys-438, Cys-397/Cys-424, and Cys-399/Cys-413. N-linked (GlcNAc...) asparagine glycosylation is found at Asn-135 and Asn-141. Residues 531–551 (SVLCLIEFGEIIIDFIWITVI) traverse the membrane as a helical segment. Residues 552–638 (KLVASCKGLR…MESDSEVEAI (87 aa)) lie on the Cytoplasmic side of the membrane. Residues 598–620 (NAEVYPDQQTLPIPGTPPPNYDS) form a disordered region. A PY motif; recruits WW domain-containing proteins and is thereby required for ubiquitination and inhibition of the channel by NEDD4 and NEDD4L motif is present at residues 614–618 (PPPNY). Residues Ser-631 and Ser-633 each carry the phosphoserine modification.

Belongs to the amiloride-sensitive sodium channel (TC 1.A.6) family. SCNN1B subfamily. Component of the heterotrimeric epithelial sodium channel (ENaC) composed of an alpha/SCNN1A, a beta/SCNN1B and a gamma/SCNN1G subunit. Interacts with WWP1 (via WW domains). Interacts with WWP2 (via WW domains). Interacts with the full-length immature form of PCSK9 (pro-PCSK9). Interacts (N-glycosylated) with BPIFA1; the interaction is direct and inhibits the proteolytic processing of SCNN1A and SCNN1G and the activation of ENaC. Ubiquitinated. Can be ubiquitinated at multiple sites and undergo monoubiquitination and polyubiquitination. Ubiquitination by NEDD4 or NEDD4L inhibits the ENaC channel through endocytosis, intracellular retention and degradation of its individual subunits. However, some studies could not confirm the ubiquitination of this subunit of the ENaC. Post-translationally, N-glycosylated. N-glycosylation is required for interaction with BPIFA1. In terms of processing, phosphorylated on serine and threonine residues. Aldosterone and insulin increase the basal level of phosphorylation. As to expression, expressed in lung and epididymis. In the caput region of the epididymis, expressed at the luminal and basolateral surfaces of the ducts and in the smooth muscle coat. In the caudal region of the epididymis, expressed along the luminal border but not continuously, in the smooth muscle coat, in the interstitial muscle tissue and in sperm in the caudal lumen.

The protein resides in the apical cell membrane. It localises to the cytoplasmic vesicle membrane. The enzyme catalyses Na(+)(in) = Na(+)(out). Its activity is regulated as follows. Originally identified and characterized by its inhibition by the diuretic drug amiloride. In terms of biological role, this is one of the three pore-forming subunits of the heterotrimeric epithelial sodium channel (ENaC), a critical regulator of sodium balance and fluid homeostasis. ENaC operates in epithelial tissues, where it mediates the electrodiffusion of sodium ions from extracellular fluid through the apical membrane of cells, with water following osmotically. It plays a key role in maintaining sodium homeostasis through electrogenic sodium reabsorption in the kidneys. This subunit is not essential for ENaC function in airway surface liquid homeostasis and proper mucus clearance. This chain is Epithelial sodium channel subunit beta, found in Rattus norvegicus (Rat).